Reading from the N-terminus, the 43-residue chain is Photosystem I reaction center subunit IX (43 aa).

The chain crosses the membrane as a helical span at residues 7-27 (YLSVAPVLSTLWFGSLAGLLI).

This sequence belongs to the PsaJ family.

The protein resides in the plastid. It is found in the chloroplast thylakoid membrane. In terms of biological role, may help in the organization of the PsaE and PsaF subunits. This is Photosystem I reaction center subunit IX from Aethionema cordifolium (Lebanon stonecress).